The chain runs to 511 residues: NAD(P)H-quinone oxidoreductase subunit 2 B, chloroplastic (511 aa).

A run of 13 helical transmembrane segments spans residues 24-44, 57-77, 99-119, 124-144, 149-169, 183-203, 227-247, 295-315, 323-343, 354-374, 395-415, 418-438, and 484-504; these read LLLF…GLIL, IPWL…ALLF, IFQF…VEYI, MAIT…MFLC, LITI…LSGY, YLLM…WLYG, PGIS…LSPA, WHLL…LIAI, MLAY…IVGD, YMLF…LFGL, ALSL…AGFF, LHLF…IGLL, and MIVC…IIAI.

It belongs to the complex I subunit 2 family. NDH is composed of at least 16 different subunits, 5 of which are encoded in the nucleus.

It localises to the plastid. It is found in the chloroplast thylakoid membrane. The enzyme catalyses a plastoquinone + NADH + (n+1) H(+)(in) = a plastoquinol + NAD(+) + n H(+)(out). It carries out the reaction a plastoquinone + NADPH + (n+1) H(+)(in) = a plastoquinol + NADP(+) + n H(+)(out). In terms of biological role, NDH shuttles electrons from NAD(P)H:plastoquinone, via FMN and iron-sulfur (Fe-S) centers, to quinones in the photosynthetic chain and possibly in a chloroplast respiratory chain. The immediate electron acceptor for the enzyme in this species is believed to be plastoquinone. Couples the redox reaction to proton translocation, and thus conserves the redox energy in a proton gradient. The protein is NAD(P)H-quinone oxidoreductase subunit 2 B, chloroplastic of Nandina domestica (Heavenly bamboo).